A 739-amino-acid polypeptide reads, in one-letter code: Catalase-peroxidase 2 (739 aa).

The first 26 residues, 1–26 (MKKSTIPTLSALTLAMSLAFGGSVIA), serve as a signal peptide directing secretion. The segment at residues 105–227 (WHSAGVYRIF…MGATQMGLIY (123 aa)) is a cross-link (tryptophyl-tyrosyl-methioninium (Trp-Tyr) (with M-253)). Catalysis depends on His-106, which acts as the Proton acceptor. The segment at residues 227–253 (YVNPEGPNGVPDPLASAKEIRDTFGRM) is a cross-link (tryptophyl-tyrosyl-methioninium (Tyr-Met) (with W-105)). His-268 is a binding site for heme b.

This sequence belongs to the peroxidase family. Peroxidase/catalase subfamily. In terms of assembly, homodimer or homotetramer. Heme b is required as a cofactor. Formation of the three residue Trp-Tyr-Met cross-link is important for the catalase, but not the peroxidase activity of the enzyme.

The catalysed reaction is H2O2 + AH2 = A + 2 H2O. It catalyses the reaction 2 H2O2 = O2 + 2 H2O. Functionally, bifunctional enzyme with both catalase and broad-spectrum peroxidase activity. The polypeptide is Catalase-peroxidase 2 (Shewanella sp. (strain MR-7)).